Consider the following 522-residue polypeptide: MQLPSSTKILVVGGGPAGSTAATLLAREGFEVTLVEKAIFPRYHIGESLLISVQPIIDLLGAREAVEAHGFQRKKGVLWEWGGERWLFDWKKLRYDYTFHVKREEFDEILLRNAQKNGVKVFEGIDISRLEFDGERPVAAKWSKSSTGESGTIQFEFLLDASGRAGLMATQYLRSRMFMKAFQNVATWGYWKGATIPEVEVEGPITVGSIPYGWIWGIPLRDQTMSVGLVIHQELFKEKRATQSVEEIYHEGLKASPLFQDVVLKGATLEPQIRTETDYSYISRTLAGPGFFLVGDSGAFIDPLLSSGVHLAMHSALLAAASVKSIIAGEVDMASATEFYQRCYQGHFLRWALIVASFYEVNARKETYFWTAQQLAHEELGVFNMSQADMKDVFATMVSGVVDLGDAQNAGRLQKGAERVHQYLDDDGREEDVTALLQKSKQRIFEYLDRVKNRDSRAAMQRYKAGGTETFSMGLDADGAVGGLYVTTEPRLGLLRKVVEERAEAATEAPAPAAPPPAVAEV.

FAD contacts are provided by alanine 17, glutamate 36, arginine 42, histidine 44, isoleucine 45, serine 48, arginine 103, isoleucine 127, and aspartate 296. The chloride site is built by serine 307 and glycine 308. Valine 309 is a binding site for FAD.

This sequence belongs to the flavin-dependent halogenase family.

Involved in the incorporation of a chlorinated tryptophan residue into halogenated forms of the secondary metabolites called chondramides. In Chondromyces crocatus, this protein is Tryptophan 2-halogenase.